Reading from the N-terminus, the 247-residue chain is Probable transcriptional regulatory protein Spro_2779 (247 aa).

It belongs to the TACO1 family.

It localises to the cytoplasm. In Serratia proteamaculans (strain 568), this protein is Probable transcriptional regulatory protein Spro_2779.